Reading from the N-terminus, the 64-residue chain is Purotoxin-2 (64 aa).

Residues alanine 1 to cysteine 44 form a knottin domain region. Intrachain disulfides connect cysteine 4-cysteine 19, cysteine 11-cysteine 28, cysteine 18-cysteine 44, and cysteine 30-cysteine 42. Residues glutamine 45–leucine 64 are linear cationic cytotoxin domain. Leucine 64 bears the Leucine amide mark.

The protein belongs to the neurotoxin 19 (CSTX) family. 05 (U4-Lctx) subfamily. Amidation at Leu-64 is not mandatory for activity on P2RX3. As to expression, expressed by the venom gland.

The protein resides in the secreted. Functionally, enhances the high-affinity desensitization of human P2RX3 purinoceptors. At 50 nM, the toxin decreases the IC(50) for ambient ATP from 2.67 nM to 0.77 nM in human P2RX3. In Alopecosa marikovskyi (Wolf spider), this protein is Purotoxin-2.